A 100-amino-acid chain; its full sequence is Sec-independent protein translocase protein TatA (100 aa).

The helical transmembrane segment at 1–21 (MGALKPWHIAVLVVVLILLFG) threads the bilayer. Residues 44 to 55 (KSLHDDDRDLAE) show a composition bias toward basic and acidic residues. The tract at residues 44-100 (KSLHDDDRDLAEKANAQAGYQPLPPQVQQEPYPQQTPYQAPPQQQPVVDPVQRARDS) is disordered. Residues 69–81 (QVQQEPYPQQTPY) are compositionally biased toward low complexity.

Belongs to the TatA/E family. The Tat system comprises two distinct complexes: a TatABC complex, containing multiple copies of TatA, TatB and TatC subunits, and a separate TatA complex, containing only TatA subunits. Substrates initially bind to the TatABC complex, which probably triggers association of the separate TatA complex to form the active translocon.

The protein resides in the cell membrane. Its function is as follows. Part of the twin-arginine translocation (Tat) system that transports large folded proteins containing a characteristic twin-arginine motif in their signal peptide across membranes. TatA could form the protein-conducting channel of the Tat system. The protein is Sec-independent protein translocase protein TatA of Salinispora arenicola (strain CNS-205).